A 346-amino-acid chain; its full sequence is D-fructose 1,6-bisphosphatase class 2/sedoheptulose 1,7-bisphosphatase (346 aa).

Positions 33, 57, 97, and 100 each coordinate Mn(2+). Residues 100-102 (EGT), Tyr-131, 176-178 (RDR), and 198-200 (DGD) contribute to the substrate site. Residue Glu-225 participates in Mn(2+) binding.

The protein belongs to the FBPase class 2 family. In terms of assembly, homotetramer. The cofactor is Mn(2+).

It carries out the reaction beta-D-fructose 1,6-bisphosphate + H2O = beta-D-fructose 6-phosphate + phosphate. The catalysed reaction is D-sedoheptulose 1,7-bisphosphate + H2O = D-sedoheptulose 7-phosphate + phosphate. It functions in the pathway carbohydrate biosynthesis; Calvin cycle. Its function is as follows. Catalyzes the hydrolysis of fructose 1,6-bisphosphate (Fru 1,6-P2) and sedoheptulose 1,7-bisphosphate (Sed 1,7-P2) to fructose 6-phosphate and sedoheptulose 7-phosphate, respectively. This Gloeobacter violaceus (strain ATCC 29082 / PCC 7421) protein is D-fructose 1,6-bisphosphatase class 2/sedoheptulose 1,7-bisphosphatase.